The following is a 911-amino-acid chain: Brevican core protein (911 aa).

The signal sequence occupies residues 1 to 22 (MAQLFLPLLAALVLAQAPAALA). One can recognise an Ig-like V-type domain in the interval 36–155 (RVRIAGDAPL…SSDAVEVKVK (120 aa)). 5 disulfide bridges follow: Cys-57–Cys-137, Cys-179–Cys-250, Cys-203–Cys-224, Cys-277–Cys-352, and Cys-301–Cys-322. The N-linked (GlcNAc...) asparagine glycan is linked to Asn-130. Link domains are found at residues 157 to 252 (VVFL…YCYA) and 257 to 354 (GELF…YCFR). The N-linked (GlcNAc...) asparagine glycan is linked to Asn-337. A disordered region spans residues 391–641 (QLPQEATESE…PTDSASRGGV (251 aa)). Ser-418 carries the post-translational modification Phosphoserine. An O-linked (Xyl...) (chondroitin sulfate) serine glycan is attached at Ser-418. Over residues 454-478 (EEEEKYEDEEEKEEEEEEEEVEDEA) the composition is skewed to acidic residues. O-glycosylated at two sites stretches follow at residues 520 to 530 (SPLPDGESEAS) and 540 to 545 (TETLPT). The tract at residues 569-575 (TGGPELS) is O-glycosylated at one site. A compositionally biased stretch (polar residues) spans 612 to 627 (EDNSGRTAPAGTSVQA). Ala-646 carries GPI-anchor amidated alanine lipidation. In terms of domain architecture, EGF-like spans 646 to 682 (ASGDCVPSPCHNGGTCLEEEEGVRCLCLPGYGGDLCD). 8 disulfides stabilise this stretch: Cys-650/Cys-661, Cys-655/Cys-670, Cys-672/Cys-681, Cys-688/Cys-699, Cys-716/Cys-808, Cys-784/Cys-800, Cys-815/Cys-858, and Cys-844/Cys-871. The 115-residue stretch at 695–809 (FQGACYKHFS…CNYHLSYTCK (115 aa)) folds into the C-type lectin domain. The Sushi domain maps to 813 to 873 (VSCGPPPELP…WEAPQISCVP (61 aa)). O-linked (GalNAc...) serine glycosylation is found at Ser-905 and Ser-906.

Belongs to the aggrecan/versican proteoglycan family. As to quaternary structure, interacts with TNR. O-glycosylated; contains chondroitin sulfate. O-glycosylated with a core 1 or possibly core 8 glycan. In terms of tissue distribution, expressed in the retina, specifically in the inner nuclear layer, inner plexiform layer and ganglion cell layer (at protein level). Detected in cerebrospinal fluid (at protein level). Detected in urine (at protein level).

It is found in the secreted. The protein resides in the extracellular space. It localises to the extracellular matrix. The protein localises to the membrane. In terms of biological role, may play a role in the terminally differentiating and the adult nervous system during postnatal development. Could stabilize interactions between hyaluronan (HA) and brain proteoglycans. This chain is Brevican core protein (BCAN), found in Homo sapiens (Human).